Consider the following 448-residue polypeptide: Phosphoglucosamine mutase (448 aa).

Residue Ser-101 is the Phosphoserine intermediate of the active site. Positions 101, 242, 244, and 246 each coordinate Mg(2+). Ser-101 bears the Phosphoserine mark.

It belongs to the phosphohexose mutase family. The cofactor is Mg(2+). Post-translationally, activated by phosphorylation.

The catalysed reaction is alpha-D-glucosamine 1-phosphate = D-glucosamine 6-phosphate. Its function is as follows. Catalyzes the conversion of glucosamine-6-phosphate to glucosamine-1-phosphate. The chain is Phosphoglucosamine mutase from Afipia carboxidovorans (strain ATCC 49405 / DSM 1227 / KCTC 32145 / OM5) (Oligotropha carboxidovorans).